A 438-amino-acid polypeptide reads, in one-letter code: Probable trafficking protein particle complex subunit 13 homolog (438 aa).

The protein belongs to the TRAPPC13 family.

The polypeptide is Probable trafficking protein particle complex subunit 13 homolog (Drosophila melanogaster (Fruit fly)).